The primary structure comprises 217 residues: GrpE protein homolog 1, mitochondrial (217 aa).

The N-terminal 27 residues, 1 to 27 (MAARCVRLARGSLPAFALSLRSSPRLL), are a transit peptide targeting the mitochondrion. Lys-94 is modified (N6-acetyllysine; alternate). Position 94 is an N6-succinyllysine; alternate (Lys-94). An N6-acetyllysine modification is found at Lys-100. Residue Lys-120 is modified to N6-succinyllysine. Lys-215 bears the N6-acetyllysine; alternate mark. Lys-215 bears the N6-succinyllysine; alternate mark.

The protein belongs to the GrpE family. In terms of assembly, probable component of the PAM complex at least composed of a mitochondrial HSP70 protein, GRPEL1 or GRPEL2, TIMM44, TIMM16/PAM16 and TIMM14/DNAJC19. Binds to HSP70, HSC70 and HSJ1B.

The protein localises to the mitochondrion matrix. Functionally, essential component of the PAM complex, a complex required for the translocation of transit peptide-containing proteins from the inner membrane into the mitochondrial matrix in an ATP-dependent manner. Seems to control the nucleotide-dependent binding of mitochondrial HSP70 to substrate proteins. The polypeptide is GrpE protein homolog 1, mitochondrial (GRPEL1) (Bos taurus (Bovine)).